A 37-amino-acid chain; its full sequence is U10-ctenitoxin-Co1a (37 aa).

Cystine bridges form between C2/C17, C9/C22, C16/C33, and C24/C31.

Expressed by the venom gland.

The protein resides in the secreted. Functionally, antagonist of L-type calcium channels (Cav1/CACNA1). In Ctenus ornatus (Brazilian spider), this protein is U10-ctenitoxin-Co1a.